Reading from the N-terminus, the 935-residue chain is DNA repair protein rev1 (935 aa).

The BRCT domain occupies 59–147 (SKSDLFHGLA…KILPWINYRT (89 aa)). A compositionally biased stretch (polar residues) spans 162-178 (SKPSQPEGNLEDIQTSS). Positions 162 to 193 (SKPSQPEGNLEDIQTSSQEEEHDNEKDKTKES) are disordered. Basic and acidic residues predominate over residues 184 to 193 (DNEKDKTKES). Positions 235–245 (FFSSSRLHHLS) are interaction with target DNA. Residues Arg-240 and 283–287 (DFDCF) contribute to the dCTP site. Positions 279–460 (LLHVDFDCFF…LSVQDLPGVG (182 aa)) constitute a UmuC domain. Positions 283 and 284 each coordinate Mg(2+). Residues 310 to 312 (IKN) are interaction with target DNA. DCTP is bound by residues 317-323 (SCNYEAR), Asn-329, and Asp-378. Positions 378 and 379 each coordinate Mg(2+). Interaction with target DNA regions lie at residues 460–463 (GSSQ) and 517–525 (RRSISVDVN).

It belongs to the DNA polymerase type-Y family. Mg(2+) is required as a cofactor.

It is found in the nucleus. The protein resides in the nucleolus. Its subcellular location is the mitochondrion. The protein localises to the cytoplasm. It localises to the cytoskeleton. It is found in the spindle. Functionally, deoxycytidyl transferase involved in DNA repair. Transfers a dCMP residue from dCTP to the 3'-end of a DNA primer in a template-dependent reaction. May assist in the first step in the bypass of abasic lesions by the insertion of a nucleotide opposite the lesion. Required for normal induction of mutations by physical and chemical agents. Involved in mitochondrial DNA mutagenesis. In Schizosaccharomyces pombe (strain 972 / ATCC 24843) (Fission yeast), this protein is DNA repair protein rev1.